The chain runs to 74 residues: Exodeoxyribonuclease 7 small subunit (74 aa).

Belongs to the XseB family. Heterooligomer composed of large and small subunits.

Its subcellular location is the cytoplasm. The catalysed reaction is Exonucleolytic cleavage in either 5'- to 3'- or 3'- to 5'-direction to yield nucleoside 5'-phosphates.. Its function is as follows. Bidirectionally degrades single-stranded DNA into large acid-insoluble oligonucleotides, which are then degraded further into small acid-soluble oligonucleotides. This Synechococcus elongatus (strain ATCC 33912 / PCC 7942 / FACHB-805) (Anacystis nidulans R2) protein is Exodeoxyribonuclease 7 small subunit.